Here is a 292-residue protein sequence, read N- to C-terminus: Protoheme IX farnesyltransferase (292 aa).

A run of 9 helical transmembrane segments spans residues 13-33 (ILFGNFITTLGGFFLAAQGSI), 35-55 (ILLLLLTLIGTTLVVASGCVV), 84-104 (VALVYAFVLGVMGFSILWFGV), 106-126 (GYAFLFAMIGFIVYVGFYSLW), 135-155 (TVIGSISGASPPVIGYTAVTH), 161-181 (ALLLFLAYALWQMPHSWAIAI), 206-226 (IECVIYILLFAAVLNGLYCFG), 231-251 (FFLITFNALTAYWFYLSIIGF), and 263-283 (FFLYSVILITLLSLSFSFTYQ).

This sequence belongs to the UbiA prenyltransferase family. Protoheme IX farnesyltransferase subfamily.

The protein localises to the cell inner membrane. It carries out the reaction heme b + (2E,6E)-farnesyl diphosphate + H2O = Fe(II)-heme o + diphosphate. It functions in the pathway porphyrin-containing compound metabolism; heme O biosynthesis; heme O from protoheme: step 1/1. Its function is as follows. Converts heme B (protoheme IX) to heme O by substitution of the vinyl group on carbon 2 of heme B porphyrin ring with a hydroxyethyl farnesyl side group. In Acinetobacter baumannii (strain AB307-0294), this protein is Protoheme IX farnesyltransferase.